The sequence spans 308 residues: Ribosomal protein uL3 glutamine methyltransferase (308 aa).

Belongs to the protein N5-glutamine methyltransferase family. PrmB subfamily.

The catalysed reaction is L-glutaminyl-[ribosomal protein uL3] + S-adenosyl-L-methionine = N(5)-methyl-L-glutaminyl-[ribosomal protein uL3] + S-adenosyl-L-homocysteine + H(+). Its function is as follows. Methylates large ribosomal subunit protein uL3 on a specific glutamine residue. The protein is Ribosomal protein uL3 glutamine methyltransferase of Xanthomonas campestris pv. campestris (strain ATCC 33913 / DSM 3586 / NCPPB 528 / LMG 568 / P 25).